The following is a 255-amino-acid chain: Malonyl-[acyl-carrier protein] O-methyltransferase (255 aa).

The protein belongs to the methyltransferase superfamily.

The catalysed reaction is malonyl-[ACP] + S-adenosyl-L-methionine = malonyl-[ACP] methyl ester + S-adenosyl-L-homocysteine. Its pathway is cofactor biosynthesis; biotin biosynthesis. In terms of biological role, converts the free carboxyl group of a malonyl-thioester to its methyl ester by transfer of a methyl group from S-adenosyl-L-methionine (SAM). It allows to synthesize pimeloyl-ACP via the fatty acid synthetic pathway. The polypeptide is Malonyl-[acyl-carrier protein] O-methyltransferase (Serratia marcescens).